The following is a 357-amino-acid chain: Dual-specificity RNA methyltransferase RlmN (357 aa).

The Proton acceptor role is filled by Glu89. The region spanning 109–340 (EGEKYTVCVS…CTIRESKALD (232 aa)) is the Radical SAM core domain. An intrachain disulfide couples Cys116 to Cys345. [4Fe-4S] cluster is bound by residues Cys123, Cys127, and Cys130. S-adenosyl-L-methionine-binding positions include 173 to 174 (GE), Ser203, 226 to 228 (SLH), and Asn302. The S-methylcysteine intermediate role is filled by Cys345.

Belongs to the radical SAM superfamily. RlmN family. It depends on [4Fe-4S] cluster as a cofactor.

The protein localises to the cytoplasm. It carries out the reaction adenosine(2503) in 23S rRNA + 2 reduced [2Fe-2S]-[ferredoxin] + 2 S-adenosyl-L-methionine = 2-methyladenosine(2503) in 23S rRNA + 5'-deoxyadenosine + L-methionine + 2 oxidized [2Fe-2S]-[ferredoxin] + S-adenosyl-L-homocysteine. The enzyme catalyses adenosine(37) in tRNA + 2 reduced [2Fe-2S]-[ferredoxin] + 2 S-adenosyl-L-methionine = 2-methyladenosine(37) in tRNA + 5'-deoxyadenosine + L-methionine + 2 oxidized [2Fe-2S]-[ferredoxin] + S-adenosyl-L-homocysteine. Its function is as follows. Specifically methylates position 2 of adenine 2503 in 23S rRNA and position 2 of adenine 37 in tRNAs. m2A2503 modification seems to play a crucial role in the proofreading step occurring at the peptidyl transferase center and thus would serve to optimize ribosomal fidelity. This chain is Dual-specificity RNA methyltransferase RlmN, found in Helicobacter pylori (strain J99 / ATCC 700824) (Campylobacter pylori J99).